A 317-amino-acid polypeptide reads, in one-letter code: Melanocyte-stimulating hormone receptor (317 aa).

Over methionine 1 to glutamate 37 the chain is Extracellular. Asparagine 29 is a glycosylation site (N-linked (GlcNAc...) asparagine). Residues valine 38–isoleucine 63 traverse the membrane as a helical segment. Topologically, residues alanine 64 to serine 72 are cytoplasmic. Residues methionine 73–leucine 93 form a helical membrane-spanning segment. The Extracellular portion of the chain corresponds to glutamate 94–asparagine 118. Residues threonine 119 to valine 140 form a helical membrane-spanning segment. Topologically, residues aspartate 141 to arginine 163 are cytoplasmic. Residues alanine 164–tyrosine 183 traverse the membrane as a helical segment. The Extracellular portion of the chain corresponds to aspartate 184–cysteine 191. Residues leucine 192–leucine 211 traverse the membrane as a helical segment. Residues alanine 212–alanine 240 lie on the Cytoplasmic side of the membrane. The helical transmembrane segment at alanine 241–phenylalanine 266 threads the bilayer. At cysteine 267–asparagine 279 the chain is on the extracellular side. A helical membrane pass occupies residues phenylalanine 280–phenylalanine 300. Residues arginine 301–tryptophan 317 lie on the Cytoplasmic side of the membrane. The S-palmitoyl cysteine moiety is linked to residue cysteine 315.

It belongs to the G-protein coupled receptor 1 family. Interacts with MGRN1, but does not undergo MGRN1-mediated ubiquitination; this interaction competes with GNAS-binding and thus inhibits agonist-induced cAMP production. Interacts with OPN3; the interaction results in a decrease in MC1R-mediated cAMP signaling and ultimately a decrease in melanin production in melanocytes.

It localises to the cell membrane. Receptor for MSH (alpha, beta and gamma) and ACTH. The activity of this receptor is mediated by G proteins which activate adenylate cyclase. Mediates melanogenesis, the production of eumelanin (black/brown) and phaeomelanin (red/yellow), via regulation of cAMP signaling in melanocytes. The chain is Melanocyte-stimulating hormone receptor (MC1R) from Saguinus midas (Golden-handed tamarin).